A 264-amino-acid chain; its full sequence is Small ribosomal subunit protein eS1 (264 aa).

Positions glycine 233–valine 264 are disordered. Residues serine 242–glycine 255 are compositionally biased toward basic and acidic residues.

It belongs to the eukaryotic ribosomal protein eS1 family. In terms of assembly, component of the small ribosomal subunit. Mature ribosomes consist of a small (40S) and a large (60S) subunit. The 40S subunit contains about 33 different proteins and 1 molecule of RNA (18S). The 60S subunit contains about 49 different proteins and 3 molecules of RNA (25S, 5.8S and 5S).

The protein localises to the cytoplasm. This chain is Small ribosomal subunit protein eS1, found in Eimeria tenella (Coccidian parasite).